Reading from the N-terminus, the 456-residue chain is Gamma-glutamyl phosphate reductase (456 aa).

N-acetylserine is present on Ser2.

It belongs to the gamma-glutamyl phosphate reductase family.

The enzyme catalyses L-glutamate 5-semialdehyde + phosphate + NADP(+) = L-glutamyl 5-phosphate + NADPH + H(+). It functions in the pathway amino-acid biosynthesis; L-proline biosynthesis; L-glutamate 5-semialdehyde from L-glutamate: step 2/2. Functionally, catalyzes the NADPH dependent reduction of L-gamma-glutamyl 5-phosphate into L-glutamate 5-semialdehyde and phosphate. The product spontaneously undergoes cyclization to form 1-pyrroline-5-carboxylate. The polypeptide is Gamma-glutamyl phosphate reductase (PRO2) (Saccharomyces cerevisiae (strain ATCC 204508 / S288c) (Baker's yeast)).